Reading from the N-terminus, the 250-residue chain is Ribosomal RNA-processing protein 15 (250 aa).

A compositionally biased stretch (basic and acidic residues) spans 1-27; it reads MGSKHRVDTKDKKRTRKNAEFGREKRN. The interval 1-101 is disordered; it reads MGSKHRVDTK…NSKHDDGSTG (101 aa). 2 stretches are compositionally biased toward acidic residues: residues 43–53 and 67–83; these read MEGDEAEEDEQ and EQSD…EDDD. Position 69 is a phosphoserine (Ser69).

This sequence belongs to the RRP15 family.

It is found in the nucleus. It localises to the nucleolus. Its function is as follows. Constituent of pre-60S ribosomal particles. Required for large subunit rRNA maturation, in particular processing of the 27S pre-rRNA at the A3 and B1 sites to yield 5.8S and 25S rRNA. This is Ribosomal RNA-processing protein 15 from Saccharomyces cerevisiae (strain ATCC 204508 / S288c) (Baker's yeast).